Consider the following 371-residue polypeptide: Flagellar P-ring protein (371 aa).

The first 24 residues, 1–24, serve as a signal peptide directing secretion; sequence MSIRVLLFSIFTGFLLAAAGPALA. The segment covering 301 to 321 has biased composition (polar residues); sequence PQPFSSGTTATQPQTDISAQK. The tract at residues 301–322 is disordered; the sequence is PQPFSSGTTATQPQTDISAQKT.

It belongs to the FlgI family. The basal body constitutes a major portion of the flagellar organelle and consists of four rings (L,P,S, and M) mounted on a central rod.

It is found in the periplasm. Its subcellular location is the bacterial flagellum basal body. Assembles around the rod to form the L-ring and probably protects the motor/basal body from shearing forces during rotation. This Allorhizobium ampelinum (strain ATCC BAA-846 / DSM 112012 / S4) (Agrobacterium vitis (strain S4)) protein is Flagellar P-ring protein.